A 131-amino-acid polypeptide reads, in one-letter code: MLAKPYRLRKRQDFTAVYQQGKRWNSSHLALRTYPRRRSALALDGVKQSALNSREPPRIGISISQKVSKRAVVRNRIKRQLRAILRGLLPYLQPGWDLVIVVRPTAVECDYQQFLQELKQLLSEAEILHGY.

This sequence belongs to the RnpA family. In terms of assembly, consists of a catalytic RNA component (M1 or rnpB) and a protein subunit.

It carries out the reaction Endonucleolytic cleavage of RNA, removing 5'-extranucleotides from tRNA precursor.. Functionally, RNaseP catalyzes the removal of the 5'-leader sequence from pre-tRNA to produce the mature 5'-terminus. It can also cleave other RNA substrates such as 4.5S RNA. The protein component plays an auxiliary but essential role in vivo by binding to the 5'-leader sequence and broadening the substrate specificity of the ribozyme. This chain is Ribonuclease P protein component, found in Cyanothece sp. (strain PCC 7425 / ATCC 29141).